Consider the following 375-residue polypeptide: 23S rRNA (uracil(747)-C(5))-methyltransferase RlmC (375 aa).

4 residues coordinate [4Fe-4S] cluster: Cys3, Cys11, Cys14, and Cys87. S-adenosyl-L-methionine-binding residues include Gln212, Phe241, Glu262, and Asn307. Catalysis depends on Cys334, which acts as the Nucleophile.

This sequence belongs to the class I-like SAM-binding methyltransferase superfamily. RNA M5U methyltransferase family. RlmC subfamily.

The enzyme catalyses uridine(747) in 23S rRNA + S-adenosyl-L-methionine = 5-methyluridine(747) in 23S rRNA + S-adenosyl-L-homocysteine + H(+). In terms of biological role, catalyzes the formation of 5-methyl-uridine at position 747 (m5U747) in 23S rRNA. In Escherichia coli O45:K1 (strain S88 / ExPEC), this protein is 23S rRNA (uracil(747)-C(5))-methyltransferase RlmC.